Reading from the N-terminus, the 876-residue chain is MSQVIDSKHTPMMQQYLRLKAEAGPLLLFYRMGDFYEMFYEDAERAARLLNLTLTKRGNSNGTPIPMAGIPVHAMEQYLARLVALGESVAICEQIGDPAAAKGPVERRIVRIVTPGTLTDEALLPAKADRALAAVCVTGKREPRAGLAWLNLASGAFHVTECAPGQLESELHRIAPAELIQAESAELHMAFEGARTRVPDWHFEADGARAQLLAHFKTDSLGGFDVEDMPAAVCAAGALLRYAARTQSQALAHVQTIAAERPGQYVLLDPVTRRNLELTQTLSGEESPTLFSLLDGCRTPMGSRLLRRWLHHPLRENEPVLARQHAIATMLTARQEGEQAFAAAALLETLRDALNAFPDIERIAARVALRSVRPRELASLRDALVALPALHASLAPLSGSPRARELAAQLAMPPDIGELLARAVASEPAVAIRDGGVIAAGFDSELDELRALATDGGDFLVQLEARERERTGIGNLRVEFNRVHGFYIEVSKGQTDKVPEDYRRRQTLKNAERYITPELKTWEDRVLSAQDRSLAREKWLYEQLLDALAQYVRPLSQCASALAELDTLAALAEHARRHDWVAPELIDGAEIDIEAGRHPVVERAIERFTPNGCRLDQTRRMLLITGPNMGGKSTYMRQVALIALLARTGSFVPATRARVGRLDRIFTRIGAADDLAGGRSTFMMEMTEAAAILAASTPASLVLMDEIGRGTSTYDGLALAWAIAYRLLTHNRALTLFATHYFELTRLPAEQPTAANVHLAAAESAGGIVFLHEVREGPASRSYGIQVAQRAGVPAAVIRQASRELERLEAQGAPTPQLGLFAAALDADVQSQAMTEQAEDAAALAQLRDQLAAIDPDSLTPREALDALYRLKQHLT.

Position 626–633 (626–633 (GPNMGGKS)) interacts with ATP.

It belongs to the DNA mismatch repair MutS family.

In terms of biological role, this protein is involved in the repair of mismatches in DNA. It is possible that it carries out the mismatch recognition step. This protein has a weak ATPase activity. In Bordetella bronchiseptica (strain ATCC BAA-588 / NCTC 13252 / RB50) (Alcaligenes bronchisepticus), this protein is DNA mismatch repair protein MutS.